The sequence spans 398 residues: UPF0261 protein RA0729 (398 aa).

This sequence belongs to the UPF0261 family.

This chain is UPF0261 protein RA0729, found in Rhizobium meliloti (strain 1021) (Ensifer meliloti).